The following is a 165-amino-acid chain: Protein AIG2 C (165 aa).

14–19 (YGSILE) provides a ligand contact to substrate. Glu82 serves as the catalytic Proton acceptor.

Belongs to the gamma-glutamylcyclotransferase family. In terms of tissue distribution, expressed in floral organs, leaves, stems and roots.

Functionally, putative gamma-glutamylcyclotransferase. The protein is Protein AIG2 C of Arabidopsis thaliana (Mouse-ear cress).